The primary structure comprises 288 residues: Protein-S-isoprenylcysteine O-methyltransferase (288 aa).

The chain crosses the membrane as a helical span at residues 13-29 (SIVSFTLGASVISLPLL). The Lumenal segment spans residues 30-45 (TSSFTEQTLLAAAPGR). Residues 46 to 63 (IALVFFIAALNGLLLLLY) traverse the membrane as a helical segment. The Cytoplasmic portion of the chain corresponds to 64–73 (KAQLYQVAIR). The chain crosses the membrane as a helical span at residues 74-91 (ASFLGFAFGCGLLLSITQ). Over 92-96 (SPWKP) the chain is Lumenal. A helical membrane pass occupies residues 97–116 (FGWYVCSLSFFHYSEYLVTA). The Cytoplasmic segment spans residues 117 to 135 (MNNPRSLSIDSFLLNHSLE). Residues 136–153 (YTLAALSSWVEFTIETTI) form a helical membrane-spanning segment. Topologically, residues 154–158 (YPDLK) are lumenal. Residues 159–178 (QITWLSVIGLIMVLFGEVLR) traverse the membrane as a helical segment. Residues 179–216 (KCAMLTAGSNFNHIVQNEKSDSHTLVTSGVYSWFRHPS) are Cytoplasmic-facing. S-adenosyl-L-methionine-binding positions include Q194, 201–204 (HTLV), Y209, and 214–217 (HPSY). The helical transmembrane segment at 217-232 (YVGWFYWSIGTQVLLC) threads the bilayer. N233 is a topological domain (lumenal). Residues 234 to 248 (PLCLVGYTLASWRFF) form a helical membrane-spanning segment. Over 249-288 (SERIEEEEFSLIHFFGENYLEYKKKVPTGLPFIKGVKMEP) the chain is Cytoplasmic. Residue R251 coordinates substrate. Position 255 (E255) interacts with S-adenosyl-L-methionine.

The protein belongs to the class VI-like SAM-binding methyltransferase superfamily. Isoprenylcysteine carboxyl methyltransferase family.

The protein resides in the endoplasmic reticulum membrane. The enzyme catalyses [protein]-C-terminal S-[(2E,6E)-farnesyl]-L-cysteine + S-adenosyl-L-methionine = [protein]-C-terminal S-[(2E,6E)-farnesyl]-L-cysteine methyl ester + S-adenosyl-L-homocysteine. Its function is as follows. Catalyzes the post-translational methylation of isoprenylated C-terminal cysteine residues. This Xenopus laevis (African clawed frog) protein is Protein-S-isoprenylcysteine O-methyltransferase (icmt).